Reading from the N-terminus, the 519-residue chain is Arabinose import ATP-binding protein AraG 2 (519 aa).

2 consecutive ABC transporter domains span residues 29–264 (LSLD…MVGR) and 264–515 (RSIE…LIKL). 61 to 68 (GENGAGKS) is an ATP binding site.

Belongs to the ABC transporter superfamily. Arabinose importer (TC 3.A.1.2.2) family. As to quaternary structure, the complex is composed of two ATP-binding proteins (AraG), two transmembrane proteins (AraH) and a solute-binding protein (AraF).

Its subcellular location is the cell inner membrane. It catalyses the reaction L-arabinose(out) + ATP + H2O = L-arabinose(in) + ADP + phosphate + H(+). Functionally, part of the ABC transporter complex AraFGH involved in arabinose import. Responsible for energy coupling to the transport system. The sequence is that of Arabinose import ATP-binding protein AraG 2 from Burkholderia ambifaria (strain ATCC BAA-244 / DSM 16087 / CCUG 44356 / LMG 19182 / AMMD) (Burkholderia cepacia (strain AMMD)).